We begin with the raw amino-acid sequence, 351 residues long: MTWSATARGAHQPDNTAFTQQRLPAWQPLLSASIALPLFFCAGLAFIGLGLGLYYSSNGIKELEYDYTGDPGTGNCSVCAAAGQGRALPPPCSCAWYFSLPELFQGPVYLYYELTNFYQNNRRYGVSRDDAQLSGLPSALRHPVNECAPYQRSAAGLPIAPCGAIANSLFNDSFSLWHQRQPGGPYVEVPLDRSGIAWWTDYHVKFRNPPLVNGSLALAFQGTAPPPNWRRPVYELSPDPNNTGFINQDFVVWMRTAALPTFRKLYARIRQGNYSAGLPRGAYRVNITYNYPVRAFGGHKLLIFSSISWMGGKNPFLGIAYLVVGSLCILTGFVMLVVYIRYQDQDDDDEE.

At 1-33 the chain is on the cytoplasmic side; it reads MTWSATARGAHQPDNTAFTQQRLPAWQPLLSAS. The helical transmembrane segment at 34 to 54 threads the bilayer; it reads IALPLFFCAGLAFIGLGLGLY. At 55 to 315 the chain is on the exoplasmic loop side; the sequence is YSSNGIKELE…SISWMGGKNP (261 aa). Residues Asn75, Asn213, and Asn286 are each glycosylated (N-linked (GlcNAc...) asparagine). Residues 316–336 form a helical membrane-spanning segment; the sequence is FLGIAYLVVGSLCILTGFVML. The Cytoplasmic portion of the chain corresponds to 337–351; sequence VVYIRYQDQDDDDEE.

It belongs to the CDC50/LEM3 family. Component of a P4-ATPase flippase complex which consists of a catalytic alpha subunit and an accessory beta subunit. Interacts with alpha subunits ATP8A1, ATP8B1, ATP8B2 and ATP8B4.

It is found in the cell membrane. Accessory component of a P4-ATPase flippase complex which catalyzes the hydrolysis of ATP coupled to the transport of aminophospholipids from the outer to the inner leaflet of various membranes and ensures the maintenance of asymmetric distribution of phospholipids. Phospholipid translocation also seems to be implicated in vesicle formation and in uptake of lipid signaling molecules. The beta subunit may assist in binding of the phospholipid substrate. Can mediate the export of alpha subunits ATP8A1, ATP8B1, ATP8B2 and ATP8B4 from the ER to the plasma membrane. This chain is Cell cycle control protein 50B (TMEM30B), found in Homo sapiens (Human).